The chain runs to 181 residues: Oligoribonuclease (181 aa).

In terms of domain architecture, Exonuclease spans 8–171 (LVWIDMEMTG…DDIRESIAEL (164 aa)). Residue Y129 is part of the active site.

The protein belongs to the oligoribonuclease family.

It is found in the cytoplasm. 3'-to-5' exoribonuclease specific for small oligoribonucleotides. In Aeromonas hydrophila subsp. hydrophila (strain ATCC 7966 / DSM 30187 / BCRC 13018 / CCUG 14551 / JCM 1027 / KCTC 2358 / NCIMB 9240 / NCTC 8049), this protein is Oligoribonuclease.